A 410-amino-acid chain; its full sequence is Peptidase T-like protein YPO1009/y3403/YP_3421 (410 aa).

His82 provides a ligand contact to Zn(2+). Asp84 is an active-site residue. Asp144 provides a ligand contact to Zn(2+). The active-site Proton acceptor is Glu176. Residues Glu177, Asp200, and His382 each contribute to the Zn(2+) site.

Belongs to the peptidase M20B family. Zn(2+) is required as a cofactor.

The chain is Peptidase T-like protein YPO1009/y3403/YP_3421 from Yersinia pestis.